The sequence spans 251 residues: L,D-transpeptidase 1 (251 aa).

Residues 1 to 28 (MRRVVRYLSVVVAITLMLTAESVSIATA) form the signal peptide. The L,D-TPase catalytic domain occupies 125 to 250 (LIGVASISAH…VTVGDPIEVV (126 aa)). Substrate contacts are provided by residues tyrosine 190 and 203–204 (SG). Residue histidine 208 is the Proton donor/acceptor of the active site. Cysteine 226 acts as the Nucleophile in catalysis. Asparagine 228 provides a ligand contact to substrate.

Monomer.

The protein localises to the periplasm. The protein operates within cell wall biogenesis; peptidoglycan biosynthesis. Is irreversibly inactivated by the beta-lactams carbapenems via the formation of a covalent adduct resulting from acylation of the catalytic Cys. In terms of biological role, generates 3-&gt;3 cross-links in peptidoglycan, catalyzing the cleavage of the mDap(3)-D-Ala(4) bond of a tetrapeptide donor stem and the formation of a bond between the carbonyl of mDap(3) of the donor stem and the side chain of mDap(3) of the acceptor stem. Is specific for donor substrates containing a stem tetrapeptide since it cannot use pentapeptide stems. The sequence is that of L,D-transpeptidase 1 (ldtA) from Mycobacterium tuberculosis (strain CDC 1551 / Oshkosh).